The sequence spans 134 residues: Small ribosomal subunit protein bS6 (134 aa).

The span at 113–122 shows a compositional bias: basic and acidic residues; it reads NKDIKEKEQP. Residues 113-134 are disordered; sequence NKDIKEKEQPSESNVDADLKVN.

The protein belongs to the bacterial ribosomal protein bS6 family.

In terms of biological role, binds together with bS18 to 16S ribosomal RNA. The protein is Small ribosomal subunit protein bS6 of Borrelia recurrentis (strain A1).